Consider the following 211-residue polypeptide: 3-demethoxyubiquinol 3-hydroxylase (211 aa).

Residues Glu-60, Glu-90, His-93, Glu-142, Glu-174, and His-177 each coordinate Fe cation.

Belongs to the COQ7 family. Fe cation serves as cofactor.

It localises to the cell membrane. The enzyme catalyses a 5-methoxy-2-methyl-3-(all-trans-polyprenyl)benzene-1,4-diol + AH2 + O2 = a 3-demethylubiquinol + A + H2O. It participates in cofactor biosynthesis; ubiquinone biosynthesis. Functionally, catalyzes the hydroxylation of 2-nonaprenyl-3-methyl-6-methoxy-1,4-benzoquinol during ubiquinone biosynthesis. The chain is 3-demethoxyubiquinol 3-hydroxylase from Acinetobacter baylyi (strain ATCC 33305 / BD413 / ADP1).